The following is a 263-amino-acid chain: Peptide methionine sulfoxide reductase A4, chloroplastic (263 aa).

The N-terminal 75 residues, methionine 1–arginine 75, are a transit peptide targeting the chloroplast.

Belongs to the MsrA Met sulfoxide reductase family. As to expression, expressed in roots, stems, leaves and flowers.

It localises to the plastid. It is found in the chloroplast. It catalyses the reaction L-methionyl-[protein] + [thioredoxin]-disulfide + H2O = L-methionyl-(S)-S-oxide-[protein] + [thioredoxin]-dithiol. The enzyme catalyses [thioredoxin]-disulfide + L-methionine + H2O = L-methionine (S)-S-oxide + [thioredoxin]-dithiol. Its function is as follows. Catalyzes the reduction of methionine sulfoxide (MetSO) to methionine in proteins. Involved in abiotic and salt stress responses. Plays a protective role against oxidative stress by restoring activity to proteins that have been inactivated by methionine oxidation. MSRA family specifically reduces the MetSO S-enantiomer. This Oryza sativa subsp. japonica (Rice) protein is Peptide methionine sulfoxide reductase A4, chloroplastic.